Consider the following 321-residue polypeptide: Dolichyl N-acetyl-alpha-D-glucosaminyl phosphate 3-beta-D-2,3-diacetamido-2,3-dideoxy-beta-D-glucuronosyltransferase (321 aa).

The next 2 helical transmembrane spans lie at F252–I272 and L290–F310.

Belongs to the glycosyltransferase 2 family.

Its subcellular location is the cell membrane. It catalyses the reaction an archaeal dolichyl N-acetyl-alpha-D-glucosaminyl phosphate + UDP-2,3-diacetamido-2,3-dideoxy-alpha-D-glucuronate = an archaeal dolichyl 3-O-(2,3-diacetamido-2,3-dideoxy- beta-D-glucuronosyl)-N-acetyl- alpha-D-glucosaminyl phosphate + UDP + H(+). Its pathway is cell surface structure biogenesis; S-layer biogenesis. It functions in the pathway protein modification; protein glycosylation. Involved in the assembly of an N-linked disaccharide that decorates the S-layer glycoprotein and flagellins. AglC catalyzes the transfer of 2,3-diacetamido-2,3-dideoxy-alpha-D-glucuronic acid (Glc-2,3-diNAcA) from uridine 5'-diphospho 2,3-diacetamido-2,3-dideoxy-alpha-D-glucuronic acid (UDP-Glc-2,3-diNAcA) to the AglK product Dol-P-GlcNAc to yield Dol-P-GlcNAc-Glc-2,3-diNAcA. AglC is specific for the monophosphate-linked Dol-P-GlcNAc. The protein is Dolichyl N-acetyl-alpha-D-glucosaminyl phosphate 3-beta-D-2,3-diacetamido-2,3-dideoxy-beta-D-glucuronosyltransferase of Methanococcus voltae.